Reading from the N-terminus, the 290-residue chain is 4-hydroxy-tetrahydrodipicolinate synthase (290 aa).

Pyruvate is bound at residue Thr-42. The Proton donor/acceptor role is filled by Tyr-129. The active-site Schiff-base intermediate with substrate is Lys-157. Ile-198 serves as a coordination point for pyruvate.

This sequence belongs to the DapA family. Homotetramer; dimer of dimers.

Its subcellular location is the cytoplasm. It carries out the reaction L-aspartate 4-semialdehyde + pyruvate = (2S,4S)-4-hydroxy-2,3,4,5-tetrahydrodipicolinate + H2O + H(+). It functions in the pathway amino-acid biosynthesis; L-lysine biosynthesis via DAP pathway; (S)-tetrahydrodipicolinate from L-aspartate: step 3/4. Its function is as follows. Catalyzes the condensation of (S)-aspartate-beta-semialdehyde [(S)-ASA] and pyruvate to 4-hydroxy-tetrahydrodipicolinate (HTPA). The polypeptide is 4-hydroxy-tetrahydrodipicolinate synthase (Chlamydia felis (strain Fe/C-56) (Chlamydophila felis)).